We begin with the raw amino-acid sequence, 217 residues long: UPF0502 protein ESA_02280 (217 aa).

The protein belongs to the UPF0502 family.

The protein is UPF0502 protein ESA_02280 of Cronobacter sakazakii (strain ATCC BAA-894) (Enterobacter sakazakii).